The chain runs to 396 residues: uncharacterized protein (396 aa).

Belongs to the NAD(P)-dependent epimerase/dehydratase family. The cofactor is NAD(+). Requires NADP(+) as cofactor.

Putative nucleotide sugar epimerase/dehydrogenase. This is an uncharacterized protein from Sinorhizobium fredii (strain NBRC 101917 / NGR234).